The following is a 788-amino-acid chain: MSSARTPLPTLNERDTEQPTLGHLDSKPSSKSNMIRGRNSATSADEQPHIGNYRLLKTIGKGNFAKVKLARHILTGKEVAVKIIDKTQLNSSSLQKLFREVRIMKVLNHPNIVKLFEVIETEKTLYLVMEYASGGEVFDYLVAHGRMKEKEARAKFRQIVSAVQYCHQKFIVHRDLKAENLLLDADMNIKIADFGFSNEFTFGNKLDTFCGSPPYAAPELFQGKKYDGPEVDVWSLGVILYTLVSGSLPFDGQNLKELRERVLRGKYRIPFYMSTDCENLLKKFLILNPSKRGTLEQIMKDRWMNVGHEDDELKPYVEPLPDYKDPRRTELMVSMGYTREEIQDSLVGQRYNEVMATYLLLGYKSSELEGDTITLKPRPSADLTNSSAPSPSHKVQRSVSANPKQRRFSDQAAGPAIPTSNSYSKKTQSNNAENKRPEEDRESGRKASSTAKVPASPLPGLERKKTTPTPSTNSVLSTSTNRSRNSPLLERASLGQASIQNGKDSLTMPGSRASTASASAAVSAARPRQHQKSMSASVHPNKASGLPPTESNCEVPRPSTAPQRVPVASPSAHNISSSGGAPDRTNFPRGVSSRSTFHAGQLRQVRDQQNLPYGVTPASPSGHSQGRRGASGSIFSKFTSKFVRRNLSFRFARRNLNEPESKDRVETLRPHVVGSGGNDKEKEEFREAKPRSLRFTWSMKTTSSMEPNEMMREIRKVLDANSCQSELHEKYMLLCMHGTPGHEDFVQWEMEVCKLPRLSLNGVRFKRISGTSMAFKNIASKIANELKL.

The disordered stretch occupies residues 1–46; it reads MSSARTPLPTLNERDTEQPTLGHLDSKPSSKSNMIRGRNSATSADE. Residues 27-45 show a composition bias toward polar residues; the sequence is KPSSKSNMIRGRNSATSAD. S40 carries the phosphoserine modification. Positions 53–304 constitute a Protein kinase domain; sequence YRLLKTIGKG…LEQIMKDRWM (252 aa). T58 bears the Phosphothreonine; by autocatalysis mark. Residues 59-67 and K82 each bind ATP; that span reads IGKGNFAKV. S91, S92, and S93 each carry phosphoserine; by CaMK1. The Proton acceptor role is filled by D175. A Phosphothreonine; by LKB1 and TAOK1 modification is found at T208. The residue at position 212 (S212) is a Phosphoserine; by GSK3-beta. S274 bears the Phosphoserine; by autocatalysis mark. Position 275 is a phosphothreonine; by autocatalysis (T275). T294 is modified (phosphothreonine; by CaMK1). Positions 323 to 362 constitute a UBA domain; that stretch reads YKDPRRTELMVSMGYTREEIQDSLVGQRYNEVMATYLLLG. Positions 373–632 are disordered; sequence ITLKPRPSAD…HSQGRRGASG (260 aa). A phosphoserine mark is found at K376 and S409. A compositionally biased stretch (polar residues) spans 418-432; sequence PTSNSYSKKTQSNNA. Over residues 433-445 the composition is skewed to basic and acidic residues; the sequence is ENKRPEEDRESGR. S456 is subject to Phosphoserine. Residue T467 is modified to Phosphothreonine. Residues 467–486 show a composition bias toward polar residues; it reads TPTPSTNSVLSTSTNRSRNS. A phosphoserine mark is found at S486 and S493. Over residues 495–504 the composition is skewed to polar residues; that stretch reads GQASIQNGKD. A compositionally biased stretch (low complexity) spans 511-525; it reads SRASTASASAAVSAA. A phosphoserine mark is found at S569, S571, and S592. At T596 the chain carries Phosphothreonine; by PKC/PRKCZ. Phosphoserine occurs at positions 619 and 722. In terms of domain architecture, KA1 spans 739–788; sequence TPGHEDFVQWEMEVCKLPRLSLNGVRFKRISGTSMAFKNIASKIANELKL.

This sequence belongs to the protein kinase superfamily. CAMK Ser/Thr protein kinase family. SNF1 subfamily. In terms of assembly, homodimer. Interacts with PAK5; leading to inhibit the protein kinase activity. Interacts with MAPT/TAU. Interacts with MTCL1 isoform 1; the interaction is direct and increases MARK2 microtubule-binding ability. Interacts (when phosphorylated at Thr-596) with YWHAZ. Interacts with YWHAB, YWHAG and YWHAQ. As to quaternary structure, (Microbial infection) In case of infection, interacts with H.pylori CagA, leading to inhibit kinase activity and junctional and polarity defects. Mg(2+) is required as a cofactor. Autophosphorylated. Phosphorylated at Thr-208 by STK11/LKB1 in complex with STE20-related adapter-alpha (STRADA) pseudo kinase and CAB39. Phosphorylation at Thr-208 by TAOK1 activates the kinase activity, leading to phosphorylation and detachment of MAPT/TAU from microtubules. Phosphorylation at Ser-212 by GSK3-beta (GSK3B) inhibits the kinase activity. Phosphorylation by CaMK1 promotes activity and is required to promote neurite outgrowth. Phosphorylation at Thr-596 by PRKCZ/aPKC in polarized epithelial cells inhibits the kinase activity and promotes binding to 14-3-3 protein YWHAZ, leading to relocation from cell membrane to cytoplasm. As to expression, high levels of expression in heart, brain, skeletal muscle and pancreas, lower levels observed in lung, liver and kidney.

The protein localises to the cell membrane. It is found in the cytoplasm. Its subcellular location is the lateral cell membrane. It localises to the cytoskeleton. The protein resides in the cell projection. The protein localises to the dendrite. It catalyses the reaction L-seryl-[protein] + ATP = O-phospho-L-seryl-[protein] + ADP + H(+). It carries out the reaction L-threonyl-[protein] + ATP = O-phospho-L-threonyl-[protein] + ADP + H(+). The catalysed reaction is L-seryl-[tau protein] + ATP = O-phospho-L-seryl-[tau protein] + ADP + H(+). The enzyme catalyses L-threonyl-[tau protein] + ATP = O-phospho-L-threonyl-[tau protein] + ADP + H(+). With respect to regulation, inhibited by PAK5; inhibition is independent of the kinase activity of PAK5. Activated by phosphorylation on Thr-208. Inhibited by phosphorylation at Ser-212 and Thr-596. Inhibited by hymenialdisine. Specifically inhibited by the H.pylori CagA peptide FPLKRHDKVDDLSK that mimics host substrates and binds to the kinase substrate-binding site. Its function is as follows. Serine/threonine-protein kinase. Involved in cell polarity and microtubule dynamics regulation. Phosphorylates CRTC2/TORC2, DCX, HDAC7, KIF13B, MAP2, MAP4 and RAB11FIP2. Phosphorylates the microtubule-associated protein MAPT/TAU. Plays a key role in cell polarity by phosphorylating the microtubule-associated proteins MAP2, MAP4 and MAPT/TAU at KXGS motifs, causing detachment from microtubules, and their disassembly. Regulates epithelial cell polarity by phosphorylating RAB11FIP2. Involved in the regulation of neuronal migration through its dual activities in regulating cellular polarity and microtubule dynamics, possibly by phosphorylating and regulating DCX. Regulates axogenesis by phosphorylating KIF13B, promoting interaction between KIF13B and 14-3-3 and inhibiting microtubule-dependent accumulation of KIF13B. Also required for neurite outgrowth and establishment of neuronal polarity. Regulates localization and activity of some histone deacetylases by mediating phosphorylation of HDAC7, promoting subsequent interaction between HDAC7 and 14-3-3 and export from the nucleus. Also acts as a positive regulator of the Wnt signaling pathway, probably by mediating phosphorylation of dishevelled proteins (DVL1, DVL2 and/or DVL3). Modulates the developmental decision to build a columnar versus a hepatic epithelial cell apparently by promoting a switch from a direct to a transcytotic mode of apical protein delivery. Essential for the asymmetric development of membrane domains of polarized epithelial cells. In Homo sapiens (Human), this protein is Serine/threonine-protein kinase MARK2.